A 185-amino-acid chain; its full sequence is Ribosome-recycling factor (185 aa).

This sequence belongs to the RRF family.

The protein localises to the cytoplasm. Responsible for the release of ribosomes from messenger RNA at the termination of protein biosynthesis. May increase the efficiency of translation by recycling ribosomes from one round of translation to another. In Hydrogenovibrio crunogenus (strain DSM 25203 / XCL-2) (Thiomicrospira crunogena), this protein is Ribosome-recycling factor.